The sequence spans 321 residues: Hydropyrene synthase (321 aa).

The Mg(2+) site is built by aspartate 82, asparagine 225, serine 229, and glutamate 233. The short motif at 82 to 87 (DDRAID) is the DDxx(x)D/E motif element. Residues 225-233 (NDLHSFARE) carry the NDxxSxxxD/E motif motif.

This sequence belongs to the terpene synthase family. Mg(2+) serves as cofactor.

The catalysed reaction is (2E,6E,10E)-geranylgeranyl diphosphate = hydropyrene + diphosphate. The enzyme catalyses (2E,6E,10E)-geranylgeranyl diphosphate + H2O = hydropyrenol + diphosphate. It catalyses the reaction (2E,6E,10E)-geranylgeranyl diphosphate = isoelisabethatriene + diphosphate. Its pathway is secondary metabolite biosynthesis; terpenoid biosynthesis. Functionally, terpene synthase that catalyzes the conversion of geranylgeranyl diphosphate (GGPP) into a mixture of diterpenes, including hydropyrene (HP), hydropyrenol (HPol), isoelisabethatriene and traces of isoelisabethatriene B. Hydropyrene is the main product. Some other diterpenoids are also produced in very low quantities. The protein is Hydropyrene synthase of Streptomyces clavuligerus.